The chain runs to 136 residues: ATP synthase epsilon chain, chloroplastic (136 aa).

Belongs to the ATPase epsilon chain family. In terms of assembly, F-type ATPases have 2 components, CF(1) - the catalytic core - and CF(0) - the membrane proton channel. CF(1) has five subunits: alpha(3), beta(3), gamma(1), delta(1), epsilon(1). CF(0) has three main subunits: a, b and c.

It is found in the plastid. Its subcellular location is the chloroplast thylakoid membrane. Produces ATP from ADP in the presence of a proton gradient across the membrane. This Tetradesmus obliquus (Green alga) protein is ATP synthase epsilon chain, chloroplastic.